The chain runs to 391 residues: Cilia- and flagella-associated protein 263 (391 aa).

A disordered region spans residues 1–21; it reads MTDDDSETSASETQAQEESDL. 2 coiled-coil regions span residues 95-243 and 294-369; these read LSVD…NQEL and LRKE…LKGY.

This sequence belongs to the CFAP263 family. Forms a complex with CFAP184; the interaction is required for functional activity in cilia. Interacts with HAP1 and PCM1.

It is found in the cytoplasm. It localises to the cytoskeleton. The protein resides in the microtubule organizing center. The protein localises to the centrosome. Its subcellular location is the centriolar satellite. It is found in the cell projection. It localises to the cilium. Its function is as follows. Component of centriolar satellites contributing to primary cilium formation. In complex with CFAP263, acts as a regulator of ciliary beating that connects radial spoke 3 (RS3) to the inner dynein arm (IDA) and the nexin-dynein regulatory complex (N-DRC). The complex is positioned parallel to N-DRC and forms a connection between the arch at the base of RS3, the IDA tail and N-DRC. The polypeptide is Cilia- and flagella-associated protein 263 (CFAP263) (Bos taurus (Bovine)).